We begin with the raw amino-acid sequence, 220 residues long: Mediator of RNA polymerase II transcription subunit 19 (220 aa).

The interval A171 to E220 is disordered. Residues G178–N189 are compositionally biased toward low complexity. Positions S208–E220 are enriched in basic and acidic residues.

This sequence belongs to the Mediator complex subunit 19 family. In terms of assembly, component of the Mediator complex, which is composed of at least 21 subunits that form three structurally distinct submodules. The Mediator head module contains MED6, MED8, MED11, SRB4/MED17, SRB5/MED18, ROX3/MED19, SRB2/MED20 and SRB6/MED22, the middle module contains MED1, MED4, NUT1/MED5, MED7, CSE2/MED9, NUT2/MED10, SRB7/MED21 and SOH1/MED31, and the tail module contains MED2, PGD1/MED3, RGR1/MED14, GAL11/MED15 and SIN4/MED16. The head and the middle modules interact directly with RNA polymerase II, whereas the elongated tail module interacts with gene-specific regulatory proteins.

The protein localises to the nucleus. In terms of biological role, component of the Mediator complex, a coactivator involved in the regulated transcription of nearly all RNA polymerase II-dependent genes. Mediator functions as a bridge to convey information from gene-specific regulatory proteins to the basal RNA polymerase II transcription machinery. The Mediator complex, having a compact conformation in its free form, is recruited to promoters by direct interactions with regulatory proteins and serves for the assembly of a functional preinitiation complex with RNA polymerase II and the general transcription factors. The Mediator complex unfolds to an extended conformation and partially surrounds RNA polymerase II, specifically interacting with the unphosphorylated form of the C-terminal domain (CTD) of RNA polymerase II. The Mediator complex dissociates from the RNA polymerase II holoenzyme and stays at the promoter when transcriptional elongation begins. The chain is Mediator of RNA polymerase II transcription subunit 19 (ROX3) from Saccharomyces cerevisiae (strain ATCC 204508 / S288c) (Baker's yeast).